We begin with the raw amino-acid sequence, 295 residues long: MSHEIMRLSAFAPAKVNLFLHVGGPDGEGYHPISSLMVFADVGDRVNLQPADAPAFETSGPFGDQIPAGGDNLVVRAGQAFHRRLGGPVPPYRLILEKHLPIAAGLGGGSSDAGAALKLLRDALAPALSDDDLEALAASLGADGAACLRARALIAEGRGERLSPAPRLPELNAVLVNPGAPSPTGAVYRAYDAGVHPDGAAMPPMPDHLESAEEAAAWLAFATRNDLEAPAVRLEPHIGEVLDVLRGEPESLLVRMSGSGATCFALCASDIEAEGLAERLETMRPDWWVRRCRLS.

The active site involves K15. Residue 101-111 participates in ATP binding; sequence PIAAGLGGGSS. D143 is an active-site residue.

It belongs to the GHMP kinase family. IspE subfamily.

It catalyses the reaction 4-CDP-2-C-methyl-D-erythritol + ATP = 4-CDP-2-C-methyl-D-erythritol 2-phosphate + ADP + H(+). The protein operates within isoprenoid biosynthesis; isopentenyl diphosphate biosynthesis via DXP pathway; isopentenyl diphosphate from 1-deoxy-D-xylulose 5-phosphate: step 3/6. In terms of biological role, catalyzes the phosphorylation of the position 2 hydroxy group of 4-diphosphocytidyl-2C-methyl-D-erythritol. The chain is 4-diphosphocytidyl-2-C-methyl-D-erythritol kinase from Caulobacter vibrioides (strain ATCC 19089 / CIP 103742 / CB 15) (Caulobacter crescentus).